The sequence spans 575 residues: DNA mismatch repair protein MutL (575 aa).

The protein belongs to the DNA mismatch repair MutL/HexB family.

In terms of biological role, this protein is involved in the repair of mismatches in DNA. It is required for dam-dependent methyl-directed DNA mismatch repair. May act as a 'molecular matchmaker', a protein that promotes the formation of a stable complex between two or more DNA-binding proteins in an ATP-dependent manner without itself being part of a final effector complex. The sequence is that of DNA mismatch repair protein MutL from Dictyoglomus thermophilum (strain ATCC 35947 / DSM 3960 / H-6-12).